A 123-amino-acid polypeptide reads, in one-letter code: Small ribosomal subunit protein uS12 (123 aa).

Position 89 is a 3-methylthioaspartic acid (Asp89). Positions 102–123 are disordered; sequence LDTQGVKDRKQGRSKYGAKRPK. The segment covering 113–123 has biased composition (basic residues); that stretch reads GRSKYGAKRPK.

This sequence belongs to the universal ribosomal protein uS12 family. As to quaternary structure, part of the 30S ribosomal subunit. Contacts proteins S8 and S17. May interact with IF1 in the 30S initiation complex.

In terms of biological role, with S4 and S5 plays an important role in translational accuracy. Functionally, interacts with and stabilizes bases of the 16S rRNA that are involved in tRNA selection in the A site and with the mRNA backbone. Located at the interface of the 30S and 50S subunits, it traverses the body of the 30S subunit contacting proteins on the other side and probably holding the rRNA structure together. The combined cluster of proteins S8, S12 and S17 appears to hold together the shoulder and platform of the 30S subunit. The polypeptide is Small ribosomal subunit protein uS12 (Magnetococcus marinus (strain ATCC BAA-1437 / JCM 17883 / MC-1)).